A 250-amino-acid chain; its full sequence is uncharacterized protein (250 aa).

The signal sequence occupies residues 1–19; sequence MAKPRNAAESKAAKAQANA. Transmembrane regions (helical) follow at residues 51-71 and 73-93; these read IGAF…AGGF and MFTM…VIFG. Positions 226–250 are disordered; sequence AGVMPKGPLPTTAKMRSVQRTVRRK.

The protein localises to the cell membrane. This is an uncharacterized protein from Mycobacterium tuberculosis (strain CDC 1551 / Oshkosh).